A 352-amino-acid polypeptide reads, in one-letter code: Divinyl chlorophyll a/b light-harvesting protein PcbA (352 aa).

Helical transmembrane passes span 27 to 47, 90 to 110, 142 to 162, 203 to 223, 243 to 263, and 306 to 326; these read FIAA…AFTL, VLAI…GGLL, FILG…VEWA, VMGG…WHIA, AVLS…AFWS, and LANV…WHAL.

Belongs to the PsbB/PsbC family. IsiA/Pcb subfamily. In terms of assembly, the antenna complex consists of divinyl chlorophylls (a and b) and divinyl chlorophyll a/b binding proteins and binds less divinyl chlorophyll b than does low-light-adapted Prochlorococcus. Also forms complexes with PSII, consisting of a PSII dimer and 4 or 8 PcbA subunits. These complexes are also found under conditions of iron-starvation. It depends on divinyl chlorophyll a as a cofactor. Divinyl chlorophyll b serves as cofactor.

The protein resides in the cellular thylakoid membrane. Its function is as follows. The antenna complex functions as a light receptor, it captures and delivers excitation energy to photosystem II and possibly to photosystem I. The Prochlorales pcb genes are not related to higher plant LHCs. The polypeptide is Divinyl chlorophyll a/b light-harvesting protein PcbA (pcbA) (Prochlorococcus marinus subsp. pastoris (strain CCMP1986 / NIES-2087 / MED4)).